A 196-amino-acid polypeptide reads, in one-letter code: Secreted phosphoprotein 24 (196 aa).

The N-terminal stretch at 1–19 (MKWCGVLMVALLQSLCCSG) is a signal peptide. 2 disulfide bridges follow: Cys-83/Cys-94 and Cys-107/Cys-125. Residues 125-196 (CGQDSSSSES…RGDSFGNHLE (72 aa)) form a disordered region. The segment covering 129–138 (SSSSESSSEE) has biased composition (low complexity).

It belongs to the SPP2 family. Multiply phosphorylated at serine residues.

The protein localises to the secreted. Functionally, could coordinate an aspect of bone turnover. The protein is Secreted phosphoprotein 24 (spp2) of Salmo salar (Atlantic salmon).